The sequence spans 122 residues: Small ribosomal subunit protein uS13 (122 aa).

A disordered region spans residues R99–K122.

This sequence belongs to the universal ribosomal protein uS13 family. As to quaternary structure, part of the 30S ribosomal subunit. Forms a loose heterodimer with protein S19. Forms two bridges to the 50S subunit in the 70S ribosome.

Its function is as follows. Located at the top of the head of the 30S subunit, it contacts several helices of the 16S rRNA. In the 70S ribosome it contacts the 23S rRNA (bridge B1a) and protein L5 of the 50S subunit (bridge B1b), connecting the 2 subunits; these bridges are implicated in subunit movement. Contacts the tRNAs in the A and P-sites. The protein is Small ribosomal subunit protein uS13 of Bradyrhizobium sp. (strain ORS 278).